Here is a 332-residue protein sequence, read N- to C-terminus: MTKITVFGMGSFGTALANVLAENGHDVLMWGKNQDAVDELNTCHTNKKYLKYAKLDVNIIATSDMTKAIQFADIYLMALPTKAMREVASQINDKLTSKKTFIHVAKGIENGTFKRVSEMIEDSISPEYNAGIGVLSGPSHAEEVVVKQPTTVAASSKDKSVSKLTQDLFMNDYLRVYTNDDLIGVELGGALKNIIAVASGIVAGIGYGDNAKAALMTRGLAEISRLGEKLGADPMTFLGLGGIGDLIVTCTSTHSRNFTLGYKLGQGESMDQALSEMNMVVEGIYTTKSVYHLAKEKNVDMPITNALYRVLFENISVKECVKDLMERDKKSE.

Ser11, Phe12, Lys32, and Lys106 together coordinate NADPH. Positions 106, 137, and 139 each coordinate sn-glycerol 3-phosphate. Ala141 lines the NADPH pocket. 5 residues coordinate sn-glycerol 3-phosphate: Lys192, Asp245, Ser255, Arg256, and Asn257. The active-site Proton acceptor is the Lys192. Arg256 is a binding site for NADPH. NADPH-binding residues include Val280 and Glu282.

Belongs to the NAD-dependent glycerol-3-phosphate dehydrogenase family.

Its subcellular location is the cytoplasm. It catalyses the reaction sn-glycerol 3-phosphate + NAD(+) = dihydroxyacetone phosphate + NADH + H(+). The catalysed reaction is sn-glycerol 3-phosphate + NADP(+) = dihydroxyacetone phosphate + NADPH + H(+). The protein operates within membrane lipid metabolism; glycerophospholipid metabolism. Catalyzes the reduction of the glycolytic intermediate dihydroxyacetone phosphate (DHAP) to sn-glycerol 3-phosphate (G3P), the key precursor for phospholipid synthesis. The protein is Glycerol-3-phosphate dehydrogenase [NAD(P)+] of Staphylococcus aureus (strain USA300).